The chain runs to 897 residues: Isoleucine--tRNA ligase (897 aa).

Residues proline 59 to histidine 69 carry the 'HIGH' region motif. Glutamate 553 is an L-isoleucyl-5'-AMP binding site. A 'KMSKS' region motif is present at residues lysine 594 to serine 598. Lysine 597 provides a ligand contact to ATP. Residues cysteine 866, cysteine 869, cysteine 883, and cysteine 886 each contribute to the Zn(2+) site.

It belongs to the class-I aminoacyl-tRNA synthetase family. IleS type 1 subfamily. Monomer. The cofactor is Zn(2+).

Its subcellular location is the cytoplasm. It catalyses the reaction tRNA(Ile) + L-isoleucine + ATP = L-isoleucyl-tRNA(Ile) + AMP + diphosphate. Functionally, catalyzes the attachment of isoleucine to tRNA(Ile). As IleRS can inadvertently accommodate and process structurally similar amino acids such as valine, to avoid such errors it has two additional distinct tRNA(Ile)-dependent editing activities. One activity is designated as 'pretransfer' editing and involves the hydrolysis of activated Val-AMP. The other activity is designated 'posttransfer' editing and involves deacylation of mischarged Val-tRNA(Ile). This is Isoleucine--tRNA ligase from Mycoplasmopsis synoviae (strain 53) (Mycoplasma synoviae).